An 879-amino-acid polypeptide reads, in one-letter code: Alanine--tRNA ligase (879 aa).

Positions 426–449 (KQKERARNARGNMDGESWKEDPLS) are disordered. The Zn(2+) site is built by histidine 566, histidine 570, cysteine 668, and histidine 672.

Belongs to the class-II aminoacyl-tRNA synthetase family. It depends on Zn(2+) as a cofactor.

The protein resides in the cytoplasm. The catalysed reaction is tRNA(Ala) + L-alanine + ATP = L-alanyl-tRNA(Ala) + AMP + diphosphate. Catalyzes the attachment of alanine to tRNA(Ala) in a two-step reaction: alanine is first activated by ATP to form Ala-AMP and then transferred to the acceptor end of tRNA(Ala). Also edits incorrectly charged Ser-tRNA(Ala) and Gly-tRNA(Ala) via its editing domain. This is Alanine--tRNA ligase from Clostridioides difficile (strain 630) (Peptoclostridium difficile).